Here is a 239-residue protein sequence, read N- to C-terminus: Suppressor of organelle fusion 1 (239 aa).

The protein belongs to the WD repeat WDR91 family. In terms of assembly, interacts with sorf-2; the interaction is direct. Interacts with bec-1.

The protein resides in the early endosome. Its subcellular location is the late endosome. It is found in the cytoplasm. Functionally, together with sorf-2 negatively regulates the levels of phosphatidylinositol 3-phosphate (PtdIns3P) to enable the conversion of early endosomes to late endosomes. Binds to sorf-2 and the sorf-1-sorf-2 complex likely acts through bec-1, a non-catalytic subunit of phosphatidylinositol 3-kinase (PI3K), to suppress PI3K activity, thereby negatively regulating endosomal PtdIns3P levels. The polypeptide is Suppressor of organelle fusion 1 (Caenorhabditis elegans).